Reading from the N-terminus, the 288-residue chain is Undecaprenyl-diphosphatase (288 aa).

Helical transmembrane passes span 25-45 (GITE…NEFL), 53-73 (FIDM…MVIY), 93-113 (WKLW…GLLL), 121-141 (LSNF…FIWI), 171-191 (VLSI…GIIV), 196-216 (SVAA…YSGL), 231-251 (GQAA…LFVI), and 263-283 (FTVF…YGAV).

This sequence belongs to the UppP family.

The protein resides in the cell membrane. It carries out the reaction di-trans,octa-cis-undecaprenyl diphosphate + H2O = di-trans,octa-cis-undecaprenyl phosphate + phosphate + H(+). Its function is as follows. Catalyzes the dephosphorylation of undecaprenyl diphosphate (UPP). Confers resistance to bacitracin. The protein is Undecaprenyl-diphosphatase of Streptococcus thermophilus (strain ATCC BAA-250 / LMG 18311).